A 161-amino-acid chain; its full sequence is MPHSYGYRARTRALFARAFKTNGPVHLSTYLTNFKIGEYVDVVGNAAVHKGMPFKYYHGRTGIVWNVTKRAIGVEINKRVRHRIIKKRIHVRIDHVKKSSCRDSFLKRVKENDKIKHDAHVAKLPVPSTKRLPVLPKAGAIIKSKGQVPETCHAIPYEHLV.

This sequence belongs to the eukaryotic ribosomal protein eL21 family.

The polypeptide is Large ribosomal subunit protein eL21 (RPL21) (Cyanophora paradoxa).